Here is a 584-residue protein sequence, read N- to C-terminus: Phosphoinositide phospholipase C 7 (584 aa).

The 77-residue stretch at 26 to 102 folds into the EF-hand-like domain; the sequence is EIKTLFDNYS…NSPLSSLEVH (77 aa). Residues 103–248 form the PI-PLC X-box domain; it reads QDMDAPLSHY…LKKRIMISTK (146 aa). Active-site residues include H118 and H164. Residues 285–318 are disordered; the sequence is DRSVDKNDSNGDDDDDDDDDDDDDDGDDKIKKNA. S287 bears the Phosphoserine mark. Residues 294 to 311 show a composition bias toward acidic residues; it reads NGDDDDDDDDDDDDDDGD. A PI-PLC Y-box domain is found at 323-439; that stretch reads KHLIAIEAGK…GYIKKPDLLL (117 aa). Residues 433–566 form the C2 domain; it reads KKPDLLLKSN…QGIRAVPLRN (134 aa).

It depends on Ca(2+) as a cofactor. As to expression, expressed in leaves, roots, flowers and siliques.

The protein localises to the cell membrane. The enzyme catalyses a 1,2-diacyl-sn-glycero-3-phospho-(1D-myo-inositol-4,5-bisphosphate) + H2O = 1D-myo-inositol 1,4,5-trisphosphate + a 1,2-diacyl-sn-glycerol + H(+). Functionally, the production of the second messenger molecules diacylglycerol (DAG) and inositol 1,4,5-trisphosphate (IP3) is mediated by activated phosphatidylinositol-specific phospholipase C enzymes. The sequence is that of Phosphoinositide phospholipase C 7 (PLC7) from Arabidopsis thaliana (Mouse-ear cress).